The chain runs to 505 residues: tRNA-2-methylthio-N(6)-dimethylallyladenosine synthase (505 aa).

Residues 14–132 (RTYEVRTYGC…LPVLLERARV (119 aa)) enclose the MTTase N-terminal domain. 6 residues coordinate [4Fe-4S] cluster: C23, C61, C95, C169, C173, and C176. Residues 155–386 (RESAYAAWVS…ALQEEISWEE (232 aa)) enclose the Radical SAM core domain. In terms of domain architecture, TRAM spans 388–456 (KKQVGRTLEL…PHHLLAEGPV (69 aa)).

The protein belongs to the methylthiotransferase family. MiaB subfamily. In terms of assembly, monomer. The cofactor is [4Fe-4S] cluster.

Its subcellular location is the cytoplasm. The enzyme catalyses N(6)-dimethylallyladenosine(37) in tRNA + (sulfur carrier)-SH + AH2 + 2 S-adenosyl-L-methionine = 2-methylsulfanyl-N(6)-dimethylallyladenosine(37) in tRNA + (sulfur carrier)-H + 5'-deoxyadenosine + L-methionine + A + S-adenosyl-L-homocysteine + 2 H(+). Catalyzes the methylthiolation of N6-(dimethylallyl)adenosine (i(6)A), leading to the formation of 2-methylthio-N6-(dimethylallyl)adenosine (ms(2)i(6)A) at position 37 in tRNAs that read codons beginning with uridine. This Streptomyces viridosporus (strain ATCC 14672 / DSM 40746 / JCM 4963 / KCTC 9882 / NRRL B-12104 / FH 1290) (Streptomyces ghanaensis) protein is tRNA-2-methylthio-N(6)-dimethylallyladenosine synthase.